The following is a 321-amino-acid chain: Transaldolase (321 aa).

The Schiff-base intermediate with substrate role is filled by lysine 132.

Belongs to the transaldolase family. Type 1 subfamily. As to quaternary structure, homodimer.

The protein resides in the cytoplasm. It catalyses the reaction D-sedoheptulose 7-phosphate + D-glyceraldehyde 3-phosphate = D-erythrose 4-phosphate + beta-D-fructose 6-phosphate. It participates in carbohydrate degradation; pentose phosphate pathway; D-glyceraldehyde 3-phosphate and beta-D-fructose 6-phosphate from D-ribose 5-phosphate and D-xylulose 5-phosphate (non-oxidative stage): step 2/3. Functionally, transaldolase is important for the balance of metabolites in the pentose-phosphate pathway. This chain is Transaldolase, found in Agrobacterium fabrum (strain C58 / ATCC 33970) (Agrobacterium tumefaciens (strain C58)).